We begin with the raw amino-acid sequence, 383 residues long: Lipid-A-disaccharide synthase (383 aa).

The protein belongs to the LpxB family.

It catalyses the reaction 2-N,3-O-bis[(3R)-3-hydroxytetradecanoyl]-alpha-D-glucosaminyl 1-phosphate + UDP-2-N,3-O-bis[(3R)-3-hydroxytetradecanoyl]-alpha-D-glucosamine = lipid A disaccharide (E. coli) + UDP + H(+). The catalysed reaction is a lipid X + a UDP-2-N,3-O-bis[(3R)-3-hydroxyacyl]-alpha-D-glucosamine = a lipid A disaccharide + UDP + H(+). Its pathway is glycolipid biosynthesis; lipid IV(A) biosynthesis; lipid IV(A) from (3R)-3-hydroxytetradecanoyl-[acyl-carrier-protein] and UDP-N-acetyl-alpha-D-glucosamine: step 5/6. Functionally, condensation of UDP-2,3-diacylglucosamine and 2,3-diacylglucosamine-1-phosphate to form lipid A disaccharide, a precursor of lipid A, a phosphorylated glycolipid that anchors the lipopolysaccharide to the outer membrane of the cell. This chain is Lipid-A-disaccharide synthase, found in Klebsiella pneumoniae subsp. pneumoniae (strain ATCC 700721 / MGH 78578).